A 132-amino-acid polypeptide reads, in one-letter code: Fluoride-specific ion channel FluC (132 aa).

4 helical membrane-spanning segments follow: residues 5-25 (LYIA…SGLV), 32-52 (TFPW…GFFA), 70-90 (FVMT…LQTL), and 105-125 (VVGS…AAVG). Na(+) contacts are provided by Gly-77 and Thr-80.

The protein belongs to the fluoride channel Fluc/FEX (TC 1.A.43) family.

It is found in the cell inner membrane. It carries out the reaction fluoride(in) = fluoride(out). Its activity is regulated as follows. Na(+) is not transported, but it plays an essential structural role and its presence is essential for fluoride channel function. Functionally, fluoride-specific ion channel. Important for reducing fluoride concentration in the cell, thus reducing its toxicity. The protein is Fluoride-specific ion channel FluC of Opitutus terrae (strain DSM 11246 / JCM 15787 / PB90-1).